A 353-amino-acid polypeptide reads, in one-letter code: Inactive ADP-ribosyltransferase ARH2 (353 aa).

Phosphoserine is present on Ser27.

The protein belongs to the ADP-ribosylglycohydrolase family.

It localises to the cytoplasm. It is found in the myofibril. Its subcellular location is the sarcomere. Its function is as follows. Required for myofibril assembly and outgrowth of the cardiac chambers in the developing heart. Appears to be catalytically inactive, showing no activity against O-acetyl-ADP-ribose. This chain is Inactive ADP-ribosyltransferase ARH2 (Adprhl1), found in Rattus norvegicus (Rat).